The primary structure comprises 369 residues: Anhydro-N-acetylmuramic acid kinase (369 aa).

Residue 12-19 (GTSLDGVD) participates in ATP binding.

This sequence belongs to the anhydro-N-acetylmuramic acid kinase family.

The enzyme catalyses 1,6-anhydro-N-acetyl-beta-muramate + ATP + H2O = N-acetyl-D-muramate 6-phosphate + ADP + H(+). The protein operates within amino-sugar metabolism; 1,6-anhydro-N-acetylmuramate degradation. It functions in the pathway cell wall biogenesis; peptidoglycan recycling. Functionally, catalyzes the specific phosphorylation of 1,6-anhydro-N-acetylmuramic acid (anhMurNAc) with the simultaneous cleavage of the 1,6-anhydro ring, generating MurNAc-6-P. Is required for the utilization of anhMurNAc either imported from the medium or derived from its own cell wall murein, and thus plays a role in cell wall recycling. The chain is Anhydro-N-acetylmuramic acid kinase from Escherichia coli O6:K15:H31 (strain 536 / UPEC).